The chain runs to 298 residues: GTPase Era (298 aa).

One can recognise an Era-type G domain in the interval lysine 3–glutamate 170. The G1 stretch occupies residues glycine 11 to serine 18. Glycine 11–serine 18 contributes to the GTP binding site. Residues glutamine 37 to asparagine 41 form a G2 region. The interval aspartate 58–glycine 61 is G3. GTP is bound by residues aspartate 58 to isoleucine 62 and asparagine 120 to aspartate 123. Positions asparagine 120 to aspartate 123 are G4. Residues isoleucine 149–alanine 151 form a G5 region. One can recognise a KH type-2 domain in the interval threonine 201–lysine 279.

It belongs to the TRAFAC class TrmE-Era-EngA-EngB-Septin-like GTPase superfamily. Era GTPase family. As to quaternary structure, monomer.

It is found in the cytoplasm. It localises to the cell membrane. Its function is as follows. An essential GTPase that binds both GDP and GTP, with rapid nucleotide exchange. Plays a role in 16S rRNA processing and 30S ribosomal subunit biogenesis and possibly also in cell cycle regulation and energy metabolism. The polypeptide is GTPase Era (Streptococcus pyogenes serotype M2 (strain MGAS10270)).